Here is a 391-residue protein sequence, read N- to C-terminus: DNA repair protein NreB (391 aa).

Residues 3–17 form a C4-type zinc finger; the sequence is CIECRGRMLCSRKVC. A PIP motif motif is present at residues 384 to 391; the sequence is QRTLWEFM.

This sequence belongs to the Nre family. As to quaternary structure, interacts with the DNA polymerase sliding clamp (PCNA) via the PIP (PCNA-interacting peptide) motif.

Involved in DNA damage repair. The polypeptide is DNA repair protein NreB (Archaeoglobus fulgidus (strain ATCC 49558 / DSM 4304 / JCM 9628 / NBRC 100126 / VC-16)).